We begin with the raw amino-acid sequence, 333 residues long: L-lactate dehydrogenase A chain (333 aa).

NAD(+) contacts are provided by residues 30–58 and Arg100; that span reads GAVGMACAMSILMKDLADELALVDVIEDK. The substrate site is built by Arg107, Asn139, and Arg170. Asn139 lines the NAD(+) pocket. His194 serves as the catalytic Proton acceptor. Residue Thr249 coordinates substrate.

This sequence belongs to the LDH/MDH superfamily. LDH family. In terms of assembly, homotetramer.

Its subcellular location is the cytoplasm. It carries out the reaction (S)-lactate + NAD(+) = pyruvate + NADH + H(+). It participates in fermentation; pyruvate fermentation to lactate; (S)-lactate from pyruvate: step 1/1. Its function is as follows. Interconverts simultaneously and stereospecifically pyruvate and lactate with concomitant interconversion of NADH and NAD(+). This chain is L-lactate dehydrogenase A chain (LDHA), found in Ambystoma mexicanum (Axolotl).